The chain runs to 320 residues: MATESLAEVPVPGCNCFWYLGVVAAVWWGLRAAWCLLDGARVWVLGSGAQVGPRIGKWAVVTGATDGIGKAYAEELAKRGMNIVLISRSPEKLEEVAKQIKEKFKVETKIIAADFGKPTEIYGRIESGLRDLEIGVLVNNVGVSYEHPEYFLEIPDLENTLDKMININITSVCQMTRLVLPGMLGRGRGVILNISSASGMYPVPLLTVYSATKAFVDFFSRGLQAEYRSKGVTVQSVLPFYVATKLAKIRKPTWDKPSPETYVQSALNTVGLQTQTNGYLPHAIMGWISTSLVPVSTAISLGMKMNKGLRARFLKRAKQK.

A helical membrane pass occupies residues 17 to 37 (FWYLGVVAAVWWGLRAAWCLL). 56-85 (GKWAVVTGATDGIGKAYAEELAKRGMNIVL) contacts NADP(+). A run of 2 helical transmembrane segments spans residues 189 to 209 (GVIL…LTVY) and 283 to 303 (AIMG…SLGM). Serine 196 contributes to the substrate binding site. The active-site Proton acceptor is tyrosine 209.

Belongs to the short-chain dehydrogenases/reductases (SDR) family. 17-beta-HSD 3 subfamily.

It is found in the endoplasmic reticulum membrane. It carries out the reaction a very-long-chain (3R)-3-hydroxyacyl-CoA + NADP(+) = a very-long-chain 3-oxoacyl-CoA + NADPH + H(+). The enzyme catalyses 17beta-estradiol + NAD(+) = estrone + NADH + H(+). The catalysed reaction is 17beta-estradiol + NADP(+) = estrone + NADPH + H(+). It catalyses the reaction 3-oxooctadecanoyl-CoA + NADPH + H(+) = (3R)-hydroxyoctadecanoyl-CoA + NADP(+). It carries out the reaction (7Z,10Z,13Z,16Z)-3-oxodocosatetraenoyl-CoA + NADPH + H(+) = (3R)-hydroxy-(7Z,10Z,13Z,16Z)-docosatetraenoyl-CoA + NADP(+). The enzyme catalyses 3-oxo-(7Z,10Z,13Z,16Z,19Z)-docosapentaenoyl-CoA + NADPH + H(+) = (3R)-hydroxy-(7Z,10Z,13Z,16Z,19Z)-docosapentaenoyl-CoA + NADP(+). The catalysed reaction is (8Z,11Z,14Z)-3-oxoeicosatrienoyl-CoA + NADPH + H(+) = (3R)-hydroxy-(8Z,11Z,14Z)-eicosatrienoyl-CoA + NADP(+). It participates in lipid metabolism; fatty acid biosynthesis. Its pathway is steroid biosynthesis; estrogen biosynthesis. In terms of biological role, catalyzes the second of the four reactions of the long-chain fatty acids elongation cycle. This endoplasmic reticulum-bound enzymatic process, allows the addition of two carbons to the chain of long- and very long-chain fatty acids/VLCFAs per cycle. This enzyme has a 3-ketoacyl-CoA reductase activity, reducing 3-ketoacyl-CoA to 3-hydroxyacyl-CoA, within each cycle of fatty acid elongation. Thereby, it may participate in the production of VLCFAs of different chain lengths that are involved in multiple biological processes as precursors of membrane lipids and lipid mediators. May also catalyze the transformation of estrone (E1) into estradiol (E2) and play a role in estrogen formation. This Xenopus tropicalis (Western clawed frog) protein is Very-long-chain 3-oxoacyl-CoA reductase (hsd17b12).